Consider the following 131-residue polypeptide: Protein FAM107B (131 aa).

At A2 the chain carries N-acetylalanine. 2 disordered regions span residues 39–78 (MNQKRGLAPQNKPELQKVMEKRRRDQVIKQKEEEAQKKKS) and 100–131 (KLQEEQENAPEFVKVKGNLRRTGQEVAQAQES). K50 carries the N6-acetyllysine modification. The segment covering 52 to 78 (ELQKVMEKRRRDQVIKQKEEEAQKKKS) has biased composition (basic and acidic residues). Positions 61–112 (RRDQVIKQKEEEAQKKKSDLEIELLKRQQKLEQLELEKQKLQEEQENAPEFV) form a coiled coil.

It belongs to the FAM107 family.

The protein is Protein FAM107B of Rattus norvegicus (Rat).